The sequence spans 142 residues: Pre-mRNA-splicing factor cwf18 (142 aa).

A compositionally biased stretch (basic and acidic residues) spans 24 to 45; it reads LENKTRDSQEVQKNVIEHRNYD. Positions 24–54 are disordered; the sequence is LENKTRDSQEVQKNVIEHRNYDPEVQAPKMG.

In terms of assembly, belongs to the 40S cdc5-associated complex (or cwf complex), a spliceosome sub-complex reminiscent of a late-stage spliceosome composed of the U2, U5 and U6 snRNAs and at least brr2, cdc5, cwf2/prp3, cwf3/syf1, cwf4/syf3, cwf5/ecm2, spp42/cwf6, cwf7/spf27, cwf8, cwf9, cwf10, cwf11, cwf12, prp45/cwf13, cwf14, cwf15, cwf16, cwf17, cwf18, cwf19, cwf20, cwf21, cwf22, cwf23, cwf24, cwf25, cwf26, cyp7/cwf27, cwf28, cwf29/ist3, lea1, msl1, prp5/cwf1, prp10, prp12/sap130, prp17, prp22, sap61, sap62, sap114, sap145, slu7, smb1, smd1, smd3, smf1, smg1 and syf2.

The protein localises to the nucleus. Functionally, involved in mRNA splicing where it associates with cdc5 and the other cwf proteins as part of the spliceosome. The polypeptide is Pre-mRNA-splicing factor cwf18 (cwf18) (Schizosaccharomyces pombe (strain 972 / ATCC 24843) (Fission yeast)).